The sequence spans 449 residues: Adenosylhomocysteinase (449 aa).

Serine 2 carries the N-acetylserine modification. Residue lysine 21 forms a Glycyl lysine isopeptide (Lys-Gly) (interchain with G-Cter in ubiquitin) linkage. Residues threonine 58, aspartate 134, and glutamate 159 each coordinate substrate. 160 to 162 (TTT) lines the NAD(+) pocket. Substrate contacts are provided by lysine 189 and aspartate 193. NAD(+)-binding positions include asparagine 194, 223–228 (GYGDVG), glutamate 246, 302–304 (IGH), and asparagine 349. At threonine 393 the chain carries Phosphothreonine. A Glycyl lysine isopeptide (Lys-Gly) (interchain with G-Cter in ubiquitin) cross-link involves residue lysine 413.

This sequence belongs to the adenosylhomocysteinase family. Requires NAD(+) as cofactor.

The catalysed reaction is S-adenosyl-L-homocysteine + H2O = L-homocysteine + adenosine. It functions in the pathway amino-acid biosynthesis; L-homocysteine biosynthesis; L-homocysteine from S-adenosyl-L-homocysteine: step 1/1. In terms of biological role, adenosylhomocysteine is a competitive inhibitor of S-adenosyl-L-methionine-dependent methyl transferase reactions; therefore adenosylhomocysteinase may play a key role in the control of methylations via regulation of the intracellular concentration of adenosylhomocysteine. The sequence is that of Adenosylhomocysteinase (SAH1) from Saccharomyces cerevisiae (strain ATCC 204508 / S288c) (Baker's yeast).